The chain runs to 246 residues: Ribonuclease 3 (246 aa).

The region spanning 10–143 (LERLEQALDY…LLGAIYLDGG (134 aa)) is the RNase III domain. A Mg(2+)-binding site is contributed by E56. D60 is an active-site residue. 2 residues coordinate Mg(2+): N129 and E132. The active site involves E132. The DRBM domain occupies 170 to 239 (DYKTLLQEYL…AQQALELLIE (70 aa)).

It belongs to the ribonuclease III family. As to quaternary structure, homodimer. Mg(2+) serves as cofactor.

Its subcellular location is the cytoplasm. It carries out the reaction Endonucleolytic cleavage to 5'-phosphomonoester.. Digests double-stranded RNA. Involved in the processing of primary rRNA transcript to yield the immediate precursors to the large and small rRNAs (23S and 16S). Processes some mRNAs, and tRNAs when they are encoded in the rRNA operon. Processes pre-crRNA and tracrRNA of type II CRISPR loci if present in the organism. This is Ribonuclease 3 from Magnetococcus marinus (strain ATCC BAA-1437 / JCM 17883 / MC-1).